We begin with the raw amino-acid sequence, 220 residues long: Pyridoxine/pyridoxamine 5'-phosphate oxidase (220 aa).

Residues 13–16 and lysine 77 contribute to the substrate site; that span reads RVEY. FMN-binding positions include 72–77, 87–88, lysine 94, and glutamine 116; these read RTVLCK and FT. Substrate contacts are provided by tyrosine 134, arginine 138, and serine 142. Residues 151–152 and tryptophan 197 each bind FMN; that span reads QS. Position 203-205 (203-205) interacts with substrate; sequence RLH. An FMN-binding site is contributed by arginine 207.

Belongs to the pyridoxamine 5'-phosphate oxidase family. In terms of assembly, homodimer. Requires FMN as cofactor.

It catalyses the reaction pyridoxamine 5'-phosphate + O2 + H2O = pyridoxal 5'-phosphate + H2O2 + NH4(+). The catalysed reaction is pyridoxine 5'-phosphate + O2 = pyridoxal 5'-phosphate + H2O2. It participates in cofactor metabolism; pyridoxal 5'-phosphate salvage; pyridoxal 5'-phosphate from pyridoxamine 5'-phosphate: step 1/1. The protein operates within cofactor metabolism; pyridoxal 5'-phosphate salvage; pyridoxal 5'-phosphate from pyridoxine 5'-phosphate: step 1/1. Functionally, catalyzes the oxidation of either pyridoxine 5'-phosphate (PNP) or pyridoxamine 5'-phosphate (PMP) into pyridoxal 5'-phosphate (PLP). The sequence is that of Pyridoxine/pyridoxamine 5'-phosphate oxidase from Mycolicibacterium paratuberculosis (strain ATCC BAA-968 / K-10) (Mycobacterium paratuberculosis).